The following is a 167-amino-acid chain: Multifunctional Ser/Thr-tRNA deacylase ProXp-y (167 aa).

It is found in the cytoplasm. It catalyses the reaction L-seryl-tRNA(Lys) + H2O = tRNA(Lys) + L-serine. The catalysed reaction is L-threonyl-tRNA(Lys) + H2O = tRNA(Lys) + L-threonine. The enzyme catalyses L-homoseryl-tRNA(Lys) + H2O = tRNA(Lys) + L-homoserine + H(+). It carries out the reaction L-seryl-tRNA(Ala) + H2O = tRNA(Ala) + L-serine. It catalyses the reaction L-homoseryl-tRNA(Ser) + H2O = tRNA(Ser) + L-homoserine + H(+). The catalysed reaction is L-seryl-tRNA(Thr) + H2O = tRNA(Thr) + L-serine. The enzyme catalyses L-threonyl-tRNA(Ile) + H2O = tRNA(Ile) + L-threonine. It carries out the reaction L-threonyl-tRNA(Val) + H2O = tRNA(Val) + L-threonine. It catalyses the reaction L-threonyl-tRNA(Ser) + H2O = tRNA(Ser) + L-threonine. Its function is as follows. An aminoacyl-tRNA editing enzyme that deacylates Ser-tRNA and/or Thr-tRNA mischarged by lysyl-tRNA synthetase (LysRS), threonyl-tRNA synthetase (ThrRS), seryl-tRNA synthetase (SerRS), alanyl-tRNA synthetase (AlaRS), valyl-tRNA synthetase (ValRS) and isoleucyl-tRNA synthetase (IleRS) in vitro. Also deacylates mischarged Hse-tRNA(Lys) and Hse-tRNA(Ser), and cognate Ser-tRNA(Ser) and Thr-tRNA(Thr) in vitro. The presence of cognate ThrRS abolishes the Thr-tRNA(Thr) deacylase activity, hence this activity is not applicable physiologically. Not able to remove the amino acid moiety from cognate Val-tRNA(Val), Ile-tRNA(Ile), Lys-tRNA(Lys), Ala-tRNA(Ala) or Pro-tRNA(Pro), or from incorrectly charged Ala-tRNA(Pro), Cys-tRNA(Pro) or Leu-tRNA(Pro) in vitro. May be required in vivo to prevent mistranslation and to maintain growth when the error prone stress-inducible lysyl-tRNA synthetase (LysU) is expressed under environmental pressure. The protein is Multifunctional Ser/Thr-tRNA deacylase ProXp-y of Escherichia coli O157:H7.